We begin with the raw amino-acid sequence, 162 residues long: Ecotin (162 aa).

Positions 1 to 18 (MKMFVPAVVFAASASAWA) are cleaved as a signal peptide. Cys70 and Cys107 are disulfide-bonded.

It belongs to the protease inhibitor I11 (ecotin) family. In terms of assembly, homodimer.

It localises to the periplasm. Its function is as follows. General inhibitor of pancreatic serine proteases: inhibits chymotrypsin, trypsin, elastases, factor X, kallikrein as well as a variety of other proteases. In Salmonella arizonae (strain ATCC BAA-731 / CDC346-86 / RSK2980), this protein is Ecotin.